A 163-amino-acid polypeptide reads, in one-letter code: Putative pre-16S rRNA nuclease (163 aa).

Belongs to the YqgF nuclease family.

It localises to the cytoplasm. Could be a nuclease involved in processing of the 5'-end of pre-16S rRNA. The sequence is that of Putative pre-16S rRNA nuclease from Rhodopseudomonas palustris (strain BisA53).